Reading from the N-terminus, the 227-residue chain is ATP-dependent Clp protease proteolytic subunit (227 aa).

The Nucleophile role is filled by S120. H145 is an active-site residue.

This sequence belongs to the peptidase S14 family. In terms of assembly, fourteen ClpP subunits assemble into 2 heptameric rings which stack back to back to give a disk-like structure with a central cavity, resembling the structure of eukaryotic proteasomes.

It is found in the cytoplasm. It catalyses the reaction Hydrolysis of proteins to small peptides in the presence of ATP and magnesium. alpha-casein is the usual test substrate. In the absence of ATP, only oligopeptides shorter than five residues are hydrolyzed (such as succinyl-Leu-Tyr-|-NHMec, and Leu-Tyr-Leu-|-Tyr-Trp, in which cleavage of the -Tyr-|-Leu- and -Tyr-|-Trp bonds also occurs).. In terms of biological role, cleaves peptides in various proteins in a process that requires ATP hydrolysis. Has a chymotrypsin-like activity. Plays a major role in the degradation of misfolded proteins. The sequence is that of ATP-dependent Clp protease proteolytic subunit from Rickettsia bellii (strain RML369-C).